We begin with the raw amino-acid sequence, 386 residues long: PqqA peptide cyclase (386 aa).

Residues 9-228 enclose the Radical SAM core domain; the sequence is SKPPLWLLAE…RQYIDQHHLK (220 aa). [4Fe-4S] cluster is bound by residues Cys-23, Cys-27, and Cys-30.

This sequence belongs to the radical SAM superfamily. PqqE family. In terms of assembly, interacts with PqqD. The interaction is necessary for activity of PqqE. [4Fe-4S] cluster serves as cofactor.

The catalysed reaction is [PQQ precursor protein] + S-adenosyl-L-methionine = E-Y cross-linked-[PQQ precursor protein] + 5'-deoxyadenosine + L-methionine + H(+). Its pathway is cofactor biosynthesis; pyrroloquinoline quinone biosynthesis. Catalyzes the cross-linking of a glutamate residue and a tyrosine residue in the PqqA protein as part of the biosynthesis of pyrroloquinoline quinone (PQQ). The polypeptide is PqqA peptide cyclase (Acinetobacter baylyi (strain ATCC 33305 / BD413 / ADP1)).